The primary structure comprises 397 residues: Enoyl-[acyl-carrier-protein] reductase [NADH] (397 aa).

NAD(+) is bound by residues 48–53 (GASTGY), 74–75 (FE), 111–112 (DA), and 139–140 (AA). Tyr225 is a substrate binding site. The active-site Proton donor is the Tyr235. Residues Lys244 and 273-275 (VVT) each bind NAD(+).

Belongs to the TER reductase family. As to quaternary structure, monomer.

It carries out the reaction a 2,3-saturated acyl-[ACP] + NAD(+) = a (2E)-enoyl-[ACP] + NADH + H(+). It functions in the pathway lipid metabolism; fatty acid biosynthesis. Its function is as follows. Involved in the final reduction of the elongation cycle of fatty acid synthesis (FAS II). Catalyzes the reduction of a carbon-carbon double bond in an enoyl moiety that is covalently linked to an acyl carrier protein (ACP). The protein is Enoyl-[acyl-carrier-protein] reductase [NADH] of Burkholderia pseudomallei (strain 1710b).